The sequence spans 372 residues: N-methyl-L-tryptophan oxidase (372 aa).

4 to 34 (DLIIIGSGSVGAAAGYYATRAGLKVLMTDAH) contacts FAD. Residue cysteine 307 is modified to S-8alpha-FAD cysteine.

This sequence belongs to the MSOX/MTOX family. MTOX subfamily. Monomer. FAD serves as cofactor.

The catalysed reaction is N(alpha)-methyl-L-tryptophan + O2 + H2O = L-tryptophan + formaldehyde + H2O2. In terms of biological role, catalyzes the oxidative demethylation of N-methyl-L-tryptophan. This is N-methyl-L-tryptophan oxidase from Salmonella agona (strain SL483).